The following is a 148-amino-acid chain: UPF0260 protein YcgN (148 aa).

This sequence belongs to the UPF0260 family.

In Salmonella paratyphi A (strain AKU_12601), this protein is UPF0260 protein YcgN.